The following is a 570-amino-acid chain: RNA polymerase I termination factor (570 aa).

A compositionally biased stretch (polar residues) spans 1 to 16 (MDSVSNLKSTNFQNNN). Disordered stretches follow at residues 1 to 21 (MDSV…PKES), 37 to 68 (HIKK…DMDW), and 100 to 138 (SSMR…AKIK). The segment covering 37-56 (HIKKTKKKLKKQKKRKHGSK) has biased composition (basic residues). A Phosphothreonine modification is found at threonine 64. The segment covering 108–137 (RSCHKKSSNSRSERKKHRKRKSSKERKAKI) has biased composition (basic residues). Residues 273–339 (KFTPSEENAL…SIYKHIRRKY (67 aa)) form the Myb-like 1 domain. One can recognise an HTH myb-type domain in the interval 340-391 (HIFEQRGKWTPEEDQELARLCLEKEGHWTEVGKLLGRMPEDCRDRWRNYMKC). The segment at residues 367 to 389 (WTEVGKLLGRMPEDCRDRWRNYM) is a DNA-binding region (H-T-H motif). 2 Myb-like domains span residues 392–486 (GSKR…NKLV) and 493–549 (SMLS…MREK).

Interacts with FOB1. Interacts with the RENT complex subunits NET1 and SIR2.

The protein resides in the nucleus. The protein localises to the nucleolus. Functionally, DNA-binding protein that recognizes sequence-specific replication termini (Ter sites) within rDNA. Binds to rDNA terminator elements and mediates efficient RNA polymerase I transcription termination. Required for rDNA silencing at the non-transcribed spacer 1 (NTS1). Promotes the association of SIR2 with NTS1 and contributes to maintenance of rDNA stability. The chain is RNA polymerase I termination factor from Saccharomyces cerevisiae (strain ATCC 204508 / S288c) (Baker's yeast).